Consider the following 167-residue polypeptide: Small ribosomal subunit protein uS5 (167 aa).

Residues 11 to 74 (LQEKLIAVNR…EKARRAMINV (64 aa)) enclose the S5 DRBM domain.

It belongs to the universal ribosomal protein uS5 family. As to quaternary structure, part of the 30S ribosomal subunit. Contacts proteins S4 and S8.

With S4 and S12 plays an important role in translational accuracy. Its function is as follows. Located at the back of the 30S subunit body where it stabilizes the conformation of the head with respect to the body. The chain is Small ribosomal subunit protein uS5 from Yersinia enterocolitica serotype O:8 / biotype 1B (strain NCTC 13174 / 8081).